Consider the following 299-residue polypeptide: tRNA dimethylallyltransferase 2 (299 aa).

9–16 serves as a coordination point for ATP; it reads GPTGVGKT. A substrate-binding site is contributed by 11–16; the sequence is TGVGKT. Residues 34–37 are interaction with substrate tRNA; that stretch reads DSRQ.

It belongs to the IPP transferase family. In terms of assembly, monomer. Mg(2+) is required as a cofactor.

It catalyses the reaction adenosine(37) in tRNA + dimethylallyl diphosphate = N(6)-dimethylallyladenosine(37) in tRNA + diphosphate. Catalyzes the transfer of a dimethylallyl group onto the adenine at position 37 in tRNAs that read codons beginning with uridine, leading to the formation of N6-(dimethylallyl)adenosine (i(6)A). The sequence is that of tRNA dimethylallyltransferase 2 from Parabacteroides distasonis (strain ATCC 8503 / DSM 20701 / CIP 104284 / JCM 5825 / NCTC 11152).